The primary structure comprises 213 residues: Uridine kinase (213 aa).

Residue 14–21 (GASASGKS) participates in ATP binding.

Belongs to the uridine kinase family.

Its subcellular location is the cytoplasm. The catalysed reaction is uridine + ATP = UMP + ADP + H(+). The enzyme catalyses cytidine + ATP = CMP + ADP + H(+). It participates in pyrimidine metabolism; CTP biosynthesis via salvage pathway; CTP from cytidine: step 1/3. It functions in the pathway pyrimidine metabolism; UMP biosynthesis via salvage pathway; UMP from uridine: step 1/1. The sequence is that of Uridine kinase from Vibrio vulnificus (strain CMCP6).